A 744-amino-acid polypeptide reads, in one-letter code: NAD(P)H-quinone oxidoreductase subunit 5, chloroplastic (744 aa).

16 helical membrane passes run 9–29 (WIIPFLPLPVPMLIGLGLFLF), 40–60 (WAFQSVLLLSIVMIFSMNLSI), 89–109 (IDPLTSIMSILITTVGILVLI), 125–145 (FVYMSFFSTSMLGLVTSSNLI), 147–167 (IYIFWELVGICSYLLIGFWFT), 185–205 (GDFGLLLGILGFYWITGSFEF), 219–239 (NEVNFLFVTLCAVLLFAGAIA), 258–278 (TPISALIHAATMVAAGIFLVA), 290–312 (IMNFISLIGIITVFLGATLALAQ), 327–347 (LGYMMLALGMGSYRSALFHLI), 354–374 (ALLFLGSGSVIHSMETLVGYC), 396–416 (TSFLLGTLSLCGIPPLACFWS), 425–445 (WLYSPIFAIIAWSTAGLTAFY), 549–569 (LFPILILVLFTLFVGFLGIPF), 608–628 (VFSVSISSFGIFIAFFLYKPV), and 724–744 (YLFFYFSYVSIFLLIYYFLNF).

The protein belongs to the complex I subunit 5 family. In terms of assembly, NDH is composed of at least 16 different subunits, 5 of which are encoded in the nucleus.

Its subcellular location is the plastid. The protein resides in the chloroplast thylakoid membrane. The enzyme catalyses a plastoquinone + NADH + (n+1) H(+)(in) = a plastoquinol + NAD(+) + n H(+)(out). It catalyses the reaction a plastoquinone + NADPH + (n+1) H(+)(in) = a plastoquinol + NADP(+) + n H(+)(out). In terms of biological role, NDH shuttles electrons from NAD(P)H:plastoquinone, via FMN and iron-sulfur (Fe-S) centers, to quinones in the photosynthetic chain and possibly in a chloroplast respiratory chain. The immediate electron acceptor for the enzyme in this species is believed to be plastoquinone. Couples the redox reaction to proton translocation, and thus conserves the redox energy in a proton gradient. In Mutisia acuminata, this protein is NAD(P)H-quinone oxidoreductase subunit 5, chloroplastic (ndhF).